We begin with the raw amino-acid sequence, 286 residues long: Soluble epoxide hydrolase (286 aa).

Residues 26-123 (YPLVLLHGWP…DLVERLFILD (98 aa)) enclose the AB hydrolase-1 domain. The active-site Nucleophile is the Asp99. Tyr209 (proton donor) is an active-site residue. His264 (proton acceptor) is an active-site residue.

Belongs to the AB hydrolase superfamily. Epoxide hydrolase family. In terms of assembly, homotetramer.

Its subcellular location is the cytoplasm. The protein resides in the cell membrane. It catalyses the reaction an epoxide + H2O = an ethanediol. Functionally, involved in catabolic degradation of epoxides. Shows highest activity towards C6 and C7 carbocyclic epoxides. Also active towards linear 1,2-epoxyalkanes. The protein is Soluble epoxide hydrolase of Corynebacterium sp. (strain C12).